A 253-amino-acid chain; its full sequence is MGDTITLLSRREIEKMRQAGQLAAALLDHLAPMVQPGITTLELNDEAEKWTKAHGAISAPLGYNGFPKSICTSINEVICHGIPHRKRVLQAGDIINVDVTPIVDGYHGDCSRTFFVGTPSPVAEKLVKVTEECLRLGIEAVKPGGKIGDIGAAIQSHAEAQGFSVVRDFVGHGISKIFHTAPQIPHYGKAGKGKRLRPGMVFTIEPMINEGTWEAVLLDDGWTAITKDGKLSAQFEHTIAVTEDGVEILTLGE.

H80 is a binding site for substrate. Positions 98, 109, and 172 each coordinate a divalent metal cation. Substrate is bound at residue H179. A divalent metal cation is bound by residues E205 and E236.

It belongs to the peptidase M24A family. Methionine aminopeptidase type 1 subfamily. In terms of assembly, monomer. Co(2+) serves as cofactor. It depends on Zn(2+) as a cofactor. The cofactor is Mn(2+). Requires Fe(2+) as cofactor.

It carries out the reaction Release of N-terminal amino acids, preferentially methionine, from peptides and arylamides.. Removes the N-terminal methionine from nascent proteins. The N-terminal methionine is often cleaved when the second residue in the primary sequence is small and uncharged (Met-Ala-, Cys, Gly, Pro, Ser, Thr, or Val). Requires deformylation of the N(alpha)-formylated initiator methionine before it can be hydrolyzed. This chain is Methionine aminopeptidase A, found in Synechocystis sp. (strain ATCC 27184 / PCC 6803 / Kazusa).